A 416-amino-acid polypeptide reads, in one-letter code: MKSERKAEIIAVGSELLLGQITNTNAQFISKQLAEIGVNVYYHTAVGDNPERLKRAIQVAQERSNFIIFSGGLGPTKDDLTKETIASTLGKELVLNEEAFESIQEYFRKTGRDMSPNNRKQALVLEGSDVLVNRFGMAPGMFIQENDTFYMLLPGPPSELHPMFENEAKPLISEKLGLKEKIVSVVLRFFGIGESQLETDLEDLIDAQTNPTIAPLASDGEVTLRLTAKHEDEKETERLLKETEAKILARVGEYFYGYGETSLVREASKALRDHGKTVAAAESLTGGMFSEWLTDLEGASSILSGSIVCYTNQVKQQVLGCREETLSSHGAVSKECALELAEGVRKLTGSDIGISFTGVAGPDTHEGQPVGKVFIGLSTKDHTDVFEWMFTGSRSGIRKRAVKYGLHHLLNLLKES.

It belongs to the CinA family.

The chain is Putative competence-damage inducible protein from Bacillus pumilus (strain SAFR-032).